The chain runs to 717 residues: Inhibitor of nuclear factor kappa-B kinase subunit epsilon (717 aa).

The Protein kinase domain maps to 9–315 (WHTDDLLGQG…LQRTVIHVFS (307 aa)). An ATP-binding site is contributed by 15–23 (LGQGATASV). Residue K30 forms a Glycyl lysine isopeptide (Lys-Gly) (interchain with G-Cter in ubiquitin) linkage. Residue K38 coordinates ATP. The active-site Proton acceptor is D135. The residue at position 172 (S172) is a Phosphoserine; by autocatalysis and IKKB. Residue K231 forms a Glycyl lysine isopeptide (Lys-Gly) (interchain with G-Cter in SUMO1) linkage. An interaction with DDX3X region spans residues 385-650 (SSDTPKGLAF…AQESLNKIFD (266 aa)). A Glycyl lysine isopeptide (Lys-Gly) (interchain with G-Cter in ubiquitin) cross-link involves residue K403. The leucine-zipper stretch occupies residues 452–473 (LQDTCQQTLEVTRTALLYLSSS). T503 is subject to Phosphothreonine. S665 carries the post-translational modification Phosphoserine.

Belongs to the protein kinase superfamily. Ser/Thr protein kinase family. I-kappa-B kinase subfamily. In terms of assembly, homodimer. Interacts with MAVS/IPS1. Interacts (via protein kinase domain) with TTLL12 (via N-terminus); the interaction prevents MAVS binding to IKBKE. Interacts with the adapter proteins AZI2/NAP1, TANK and TBKBP1/SINTBAD. Interacts with SIKE1. Interacts with TICAM1/TRIF, IRF3 and RIGI; interactions are disrupted by the interaction between IKBKE and SIKE1. Interacts with TOPORS; induced by DNA damage. Interacts with CYLD, IKBKB, IKBKG and MYD88. Interacts with IFIH1. Interacts with DDX3X; the interaction may be induced upon virus infection. Interacts with TRIM6 (via SPRY box). Interacts with unanchored K48-linked polyubiquitin chains; this leads to IKBKE activation. Interacts with TBK1. Interacts with FKBP5. Post-translationally, sumoylation by TOPORS upon DNA damage is required for protection of cells against DNA damage-induced cell death. Desumoylated by SENP1. Autophosphorylated and phosphorylated by IKBKB/IKKB. Phosphorylation at Ser-172 is enhanced by the interaction with DDX3X. Phosphorylated at Thr-503 upon IFN activation. In terms of processing, 'Lys-63'-linked polyubiquitinated at Lys-30 and Lys-403 by TRAF2:BIRC2 and TRAF2:BIRC3 complexes. Ubiquitination is induced by LPS, TNFA and interleukin-1 and required for full kinase activity and KF-kappa-B pathway activation. As to expression, expressed in bone marrow-derived macrophages and at low levels in liver and white adipose tissue (at protein level). Detected in muscle and lung.

It is found in the cytoplasm. The protein resides in the nucleus. It localises to the PML body. The enzyme catalyses L-seryl-[I-kappa-B protein] + ATP = O-phospho-L-seryl-[I-kappa-B protein] + ADP + H(+). With respect to regulation, kinase activity is inhibited competitively by amlexanox. Its function is as follows. Serine/threonine kinase that plays an essential role in regulating inflammatory responses to viral infection, through the activation of the type I IFN, NF-kappa-B and STAT signaling. Also involved in TNFA and inflammatory cytokines, like Interleukin-1, signaling. Following activation of viral RNA sensors, such as RIG-I-like receptors, associates with DDX3X and phosphorylates interferon regulatory factors (IRFs), IRF3 and IRF7, as well as DDX3X. This activity allows subsequent homodimerization and nuclear translocation of the IRF3 leading to transcriptional activation of pro-inflammatory and antiviral genes including IFNB. In order to establish such an antiviral state, IKBKE forms several different complexes whose composition depends on the type of cell and cellular stimuli. Thus, several scaffolding molecules including IPS1/MAVS, TANK, AZI2/NAP1 or TBKBP1/SINTBAD can be recruited to the IKBKE-containing-complexes. Activated by polyubiquitination in response to TNFA and interleukin-1, regulates the NF-kappa-B signaling pathway through, at least, the phosphorylation of CYLD. Phosphorylates inhibitors of NF-kappa-B thus leading to the dissociation of the inhibitor/NF-kappa-B complex and ultimately the degradation of the inhibitor. In addition, is also required for the induction of a subset of ISGs which displays antiviral activity, may be through the phosphorylation of STAT1 at 'Ser-708'. Phosphorylation of STAT1 at 'Ser-708' also seems to promote the assembly and DNA binding of ISGF3 (STAT1:STAT2:IRF9) complexes compared to GAF (STAT1:STAT1) complexes, in this way regulating the balance between type I and type II IFN responses. Protects cells against DNA damage-induced cell death. Also plays an important role in energy balance regulation by sustaining a state of chronic, low-grade inflammation in obesity, wich leads to a negative impact on insulin sensitivity. Phosphorylates AKT1. The sequence is that of Inhibitor of nuclear factor kappa-B kinase subunit epsilon (Ikbke) from Mus musculus (Mouse).